We begin with the raw amino-acid sequence, 147 residues long: Probable disulfide formation protein (147 aa).

The chain crosses the membrane as a helical span at residues 9–28; it reads NYSLYFAWLTALIATLGSLY. A disulfide bond links Cys-38 and Cys-41. A run of 2 helical transmembrane segments spans residues 43 to 62 and 69 to 86; these read YQRVCIYPLTILLGIAAYRT and YALPLVVLGFLFSIYQYL. Cysteines 99 and 106 form a disulfide. A helical membrane pass occupies residues 115–138; it reads GFITLPFLGMLATLIMSFFLIMAF.

It belongs to the DsbB family. BdbC subfamily.

The protein localises to the cell inner membrane. In terms of biological role, required for disulfide bond formation in some proteins. In Coxiella burnetii (strain CbuK_Q154) (Coxiella burnetii (strain Q154)), this protein is Probable disulfide formation protein.